Reading from the N-terminus, the 80-residue chain is MPYKLQESFLNTARKKRVKVSVYLVNGVRLQGRIRSFDLFTILLEDGKQQTLVYKHAITTIVPHERLEIEFEEAGVPGQG.

One can recognise a Sm domain in the interval 7 to 67 (ESFLNTARKK…ITTIVPHERL (61 aa)).

The protein belongs to the Hfq family. Homohexamer.

In terms of biological role, RNA chaperone that binds small regulatory RNA (sRNAs) and mRNAs to facilitate mRNA translational regulation in response to envelope stress, environmental stress and changes in metabolite concentrations. Also binds with high specificity to tRNAs. This is RNA-binding protein Hfq from Aquifex aeolicus (strain VF5).